The primary structure comprises 107 residues: MTTLLAYALAALAEIAGCFAIWAWLRLGRSPLWLGPGLASLILFAVLLTRVESAAAGRAYAAYGGVYVAASLLWLWAAEGQRPDRWDLGGAALCLAGSAVVLLGPRG.

A run of 4 helical transmembrane segments spans residues 4-24 (LLAYALAALAEIAGCFAIWAW), 31-51 (PLWLGPGLASLILFAVLLTRV), 59-79 (AYAAYGGVYVAASLLWLWAAE), and 85-105 (RWDLGGAALCLAGSAVVLLGP).

It belongs to the UPF0060 family.

The protein resides in the cell inner membrane. This is UPF0060 membrane protein M446_5886 from Methylobacterium sp. (strain 4-46).